The following is a 70-amino-acid chain: ATP synthase subunit c (70 aa).

2 helical membrane passes run 5–25 (AAGI…AIIV) and 47–67 (FIGV…SFIL).

The protein belongs to the ATPase C chain family. As to quaternary structure, F-type ATPases have 2 components, F(1) - the catalytic core - and F(0) - the membrane proton channel. F(1) has five subunits: alpha(3), beta(3), gamma(1), delta(1), epsilon(1). F(0) has three main subunits: a(1), b(2) and c(10-14). The alpha and beta chains form an alternating ring which encloses part of the gamma chain. F(1) is attached to F(0) by a central stalk formed by the gamma and epsilon chains, while a peripheral stalk is formed by the delta and b chains.

The protein localises to the cell membrane. In terms of biological role, f(1)F(0) ATP synthase produces ATP from ADP in the presence of a proton or sodium gradient. F-type ATPases consist of two structural domains, F(1) containing the extramembraneous catalytic core and F(0) containing the membrane proton channel, linked together by a central stalk and a peripheral stalk. During catalysis, ATP synthesis in the catalytic domain of F(1) is coupled via a rotary mechanism of the central stalk subunits to proton translocation. Functionally, key component of the F(0) channel; it plays a direct role in translocation across the membrane. A homomeric c-ring of between 10-14 subunits forms the central stalk rotor element with the F(1) delta and epsilon subunits. This chain is ATP synthase subunit c, found in Halalkalibacterium halodurans (strain ATCC BAA-125 / DSM 18197 / FERM 7344 / JCM 9153 / C-125) (Bacillus halodurans).